Here is a 355-residue protein sequence, read N- to C-terminus: Protein RecA (355 aa).

67-74 provides a ligand contact to ATP; it reads GPESSGKT. The interval 336–355 is disordered; sequence NSAASDYEDNENEEMNNEEF. A compositionally biased stretch (acidic residues) spans 341–355; sequence DYEDNENEEMNNEEF.

The protein belongs to the RecA family.

The protein resides in the cytoplasm. Functionally, can catalyze the hydrolysis of ATP in the presence of single-stranded DNA, the ATP-dependent uptake of single-stranded DNA by duplex DNA, and the ATP-dependent hybridization of homologous single-stranded DNAs. It interacts with LexA causing its activation and leading to its autocatalytic cleavage. This is Protein RecA from Photorhabdus laumondii subsp. laumondii (strain DSM 15139 / CIP 105565 / TT01) (Photorhabdus luminescens subsp. laumondii).